A 375-amino-acid chain; its full sequence is Chaperone protein DnaJ (375 aa).

The J domain occupies 5–70 (DYYEVLEISR…QKRQAYDRFG (66 aa)). A CR-type zinc finger spans residues 133–211 (GKEVTIQIPS…CHGHGRVRRN (79 aa)). Zn(2+) contacts are provided by Cys146, Cys149, Cys163, Cys166, Cys185, Cys188, Cys199, and Cys202. 4 CXXCXGXG motif repeats span residues 146–153 (CEVCRGSG), 163–170 (CATCGGRG), 185–192 (CPQCNGSG), and 199–206 (CTNCHGHG).

It belongs to the DnaJ family. Homodimer. Zn(2+) is required as a cofactor.

Its subcellular location is the cytoplasm. Its function is as follows. Participates actively in the response to hyperosmotic and heat shock by preventing the aggregation of stress-denatured proteins and by disaggregating proteins, also in an autonomous, DnaK-independent fashion. Unfolded proteins bind initially to DnaJ; upon interaction with the DnaJ-bound protein, DnaK hydrolyzes its bound ATP, resulting in the formation of a stable complex. GrpE releases ADP from DnaK; ATP binding to DnaK triggers the release of the substrate protein, thus completing the reaction cycle. Several rounds of ATP-dependent interactions between DnaJ, DnaK and GrpE are required for fully efficient folding. Also involved, together with DnaK and GrpE, in the DNA replication of plasmids through activation of initiation proteins. The sequence is that of Chaperone protein DnaJ from Acidithiobacillus ferrooxidans (strain ATCC 23270 / DSM 14882 / CIP 104768 / NCIMB 8455) (Ferrobacillus ferrooxidans (strain ATCC 23270)).